Reading from the N-terminus, the 527-residue chain is Inosine-5'-monophosphate dehydrogenase (527 aa).

CBS domains are found at residues 121-183 and 184-240; these read FILD…VTAV and MSTD…PLAS. NAD(+)-binding positions include 277–279 and 327–329; these read DSS and GMG. Residues Gly-329 and Gly-331 each contribute to the K(+) site. An IMP-binding site is contributed by Ser-332. Cys-334 serves as a coordination point for K(+). Cys-334 serves as the catalytic Thioimidate intermediate. Residues 367–369 and 390–391 each bind IMP; these read DGG and GS. Residue Arg-440 is the Proton acceptor of the active site. Gln-452 contacts IMP. Residues 506 to 527 are disordered; sequence ASAQTEGNVHGLHSHEKKLYSS. Glu-511 and Gly-512 together coordinate K(+). The span at 518-527 shows a compositional bias: basic and acidic residues; that stretch reads HSHEKKLYSS.

Belongs to the IMPDH/GMPR family. As to quaternary structure, homotetramer. K(+) is required as a cofactor.

It is found in the cytoplasm. It carries out the reaction IMP + NAD(+) + H2O = XMP + NADH + H(+). The protein operates within purine metabolism; XMP biosynthesis via de novo pathway; XMP from IMP: step 1/1. Mycophenolic acid (MPA) is a non-competitive inhibitor that prevents formation of the closed enzyme conformation by binding to the same site as the amobile flap. In contrast, mizoribine monophosphate (MZP) is a competitive inhibitor that induces the closed conformation. MPA is a potent inhibitor of mammalian IMPDHs but a poor inhibitor of the bacterial enzymes. MZP is a more potent inhibitor of bacterial IMPDH. Its function is as follows. Catalyzes the conversion of inosine 5'-phosphate (IMP) to xanthosine 5'-phosphate (XMP), the first committed and rate-limiting step in the de novo synthesis of guanine nucleotides, and therefore plays an important role in the regulation of cell growth. Part of the gene cluster that mediates the biosynthesis of mycophenolic acid (MPA), the first isolated antibiotic natural product in the world. Does not play a role in the biosynthesis of MPA, but is involved in self resistance to MPA, since MPA acts as an inhibitor of IMP dehydrogenases. This Penicillium brevicompactum protein is Inosine-5'-monophosphate dehydrogenase.